A 470-amino-acid polypeptide reads, in one-letter code: Neuraminidase (470 aa).

Topologically, residues methionine 1–alanine 14 are intravirion. An involved in apical transport and lipid raft association region spans residues serine 11 to isoleucine 33. A helical transmembrane segment spans residues leucine 15–leucine 35. The hypervariable stalk region stretch occupies residues histidine 36–threonine 89. Residues histidine 36–leucine 470 lie on the Virion surface side of the membrane. 5 N-linked (GlcNAc...) asparagine; by host glycosylation sites follow: asparagine 42, asparagine 52, asparagine 63, asparagine 66, and asparagine 87. The tract at residues leucine 92–leucine 470 is head of neuraminidase. 9 cysteine pairs are disulfide-bonded: cysteine 93/cysteine 419, cysteine 125/cysteine 130, cysteine 177/cysteine 195, cysteine 185/cysteine 232, cysteine 234/cysteine 239, cysteine 280/cysteine 293, cysteine 282/cysteine 291, cysteine 320/cysteine 338, and cysteine 423/cysteine 449. Arginine 119 provides a ligand contact to substrate. Asparagine 147 carries N-linked (GlcNAc...) asparagine; by host glycosylation. Aspartate 152 functions as the Proton donor/acceptor in the catalytic mechanism. A substrate-binding site is contributed by arginine 153. Residue asparagine 202 is glycosylated (N-linked (GlcNAc...) asparagine; by host). Glutamate 278 to glutamate 279 serves as a coordination point for substrate. Residue arginine 294 coordinates substrate. The Ca(2+) site is built by aspartate 295, glycine 299, aspartate 326, and asparagine 348. Position 372 (arginine 372) interacts with substrate. The Nucleophile role is filled by tyrosine 406.

This sequence belongs to the glycosyl hydrolase 34 family. As to quaternary structure, homotetramer. It depends on Ca(2+) as a cofactor. N-glycosylated.

The protein resides in the virion membrane. Its subcellular location is the host apical cell membrane. The enzyme catalyses Hydrolysis of alpha-(2-&gt;3)-, alpha-(2-&gt;6)-, alpha-(2-&gt;8)- glycosidic linkages of terminal sialic acid residues in oligosaccharides, glycoproteins, glycolipids, colominic acid and synthetic substrates.. Inhibited by the neuraminidase inhibitors zanamivir (Relenza) and oseltamivir (Tamiflu). These drugs interfere with the release of progeny virus from infected cells and are effective against all influenza strains. Resistance to neuraminidase inhibitors is quite rare. In terms of biological role, catalyzes the removal of terminal sialic acid residues from viral and cellular glycoconjugates. Cleaves off the terminal sialic acids on the glycosylated HA during virus budding to facilitate virus release. Additionally helps virus spread through the circulation by further removing sialic acids from the cell surface. These cleavages prevent self-aggregation and ensure the efficient spread of the progeny virus from cell to cell. Otherwise, infection would be limited to one round of replication. Described as a receptor-destroying enzyme because it cleaves a terminal sialic acid from the cellular receptors. May facilitate viral invasion of the upper airways by cleaving the sialic acid moieties on the mucin of the airway epithelial cells. Likely to plays a role in the budding process through its association with lipid rafts during intracellular transport. May additionally display a raft-association independent effect on budding. Plays a role in the determination of host range restriction on replication and virulence. Sialidase activity in late endosome/lysosome traffic seems to enhance virus replication. This chain is Neuraminidase, found in Aves.